A 339-amino-acid chain; its full sequence is Biotin synthase (339 aa).

A Radical SAM core domain is found at 55–288 (LSEGALHSCS…GKIIKFAAGR (234 aa)). Positions 73, 77, and 80 each coordinate [4Fe-4S] cluster. Residues Cys-152, Cys-213, and Lys-283 each coordinate [2Fe-2S] cluster.

The protein belongs to the radical SAM superfamily. Biotin synthase family. As to quaternary structure, homodimer. The cofactor is [4Fe-4S] cluster. It depends on [2Fe-2S] cluster as a cofactor.

The enzyme catalyses (4R,5S)-dethiobiotin + (sulfur carrier)-SH + 2 reduced [2Fe-2S]-[ferredoxin] + 2 S-adenosyl-L-methionine = (sulfur carrier)-H + biotin + 2 5'-deoxyadenosine + 2 L-methionine + 2 oxidized [2Fe-2S]-[ferredoxin]. It participates in cofactor biosynthesis; biotin biosynthesis; biotin from 7,8-diaminononanoate: step 2/2. Functionally, catalyzes the conversion of dethiobiotin (DTB) to biotin by the insertion of a sulfur atom into dethiobiotin via a radical-based mechanism. In Chlorobium phaeobacteroides (strain BS1), this protein is Biotin synthase.